Reading from the N-terminus, the 122-residue chain is Small ribosomal subunit protein uS13 (122 aa).

A disordered region spans residues 97–122; that stretch reads PVRGQRTHTNAKTRKGRSRLPIAGKK.

This sequence belongs to the universal ribosomal protein uS13 family. Part of the 30S ribosomal subunit. Forms a loose heterodimer with protein S19. Forms two bridges to the 50S subunit in the 70S ribosome.

Functionally, located at the top of the head of the 30S subunit, it contacts several helices of the 16S rRNA. In the 70S ribosome it contacts the 23S rRNA (bridge B1a) and protein L5 of the 50S subunit (bridge B1b), connecting the 2 subunits; these bridges are implicated in subunit movement. Contacts the tRNAs in the A and P-sites. This is Small ribosomal subunit protein uS13 from Wolbachia pipientis wMel.